We begin with the raw amino-acid sequence, 218 residues long: LOB domain-containing protein 29 (218 aa).

The 103-residue stretch at 10–112 (SPCGACKFLR…AELEILKQQA (103 aa)) folds into the LOB domain.

This sequence belongs to the LOB domain-containing protein family. Expressed in roots.

In terms of biological role, involved in lateral root formation. Regulated by the transcriptional activators ARF7 and ARF19. The chain is LOB domain-containing protein 29 (LBD29) from Arabidopsis thaliana (Mouse-ear cress).